The chain runs to 141 residues: uncharacterized protein (141 aa).

The signal sequence occupies residues 1–15 (MKKVAIVGALLVLAG). C16 is lipidated: N-palmitoyl cysteine. The S-diacylglycerol cysteine moiety is linked to residue C16.

Its subcellular location is the cell membrane. This is an uncharacterized protein from Salmonella typhimurium (strain LT2 / SGSC1412 / ATCC 700720).